The sequence spans 311 residues: Aspartate carbamoyltransferase catalytic subunit (311 aa).

The carbamoyl phosphate site is built by Arg-55 and Thr-56. Residue Lys-85 coordinates L-aspartate. Carbamoyl phosphate contacts are provided by Arg-106, His-135, and Gln-138. L-aspartate is bound by residues Arg-168 and Arg-230. 2 residues coordinate carbamoyl phosphate: Leu-268 and Pro-269.

This sequence belongs to the aspartate/ornithine carbamoyltransferase superfamily. ATCase family. Heterododecamer (2C3:3R2) of six catalytic PyrB chains organized as two trimers (C3), and six regulatory PyrI chains organized as three dimers (R2).

It carries out the reaction carbamoyl phosphate + L-aspartate = N-carbamoyl-L-aspartate + phosphate + H(+). Its pathway is pyrimidine metabolism; UMP biosynthesis via de novo pathway; (S)-dihydroorotate from bicarbonate: step 2/3. In terms of biological role, catalyzes the condensation of carbamoyl phosphate and aspartate to form carbamoyl aspartate and inorganic phosphate, the committed step in the de novo pyrimidine nucleotide biosynthesis pathway. The sequence is that of Aspartate carbamoyltransferase catalytic subunit from Pectobacterium atrosepticum (strain SCRI 1043 / ATCC BAA-672) (Erwinia carotovora subsp. atroseptica).